Here is a 357-residue protein sequence, read N- to C-terminus: Arginine kinase (357 aa).

Residues 9-91 enclose the Phosphagen kinase N-terminal domain; that stretch reads KLEAGFKKLQ…FNPIIEDYHE (83 aa). Residue 64–66 coordinates L-arginine; that stretch reads GVG. A Phosphagen kinase C-terminal domain is found at 119–356; the sequence is YVVSTHVRCG…LEMIKMEEAA (238 aa). ATP contacts are provided by residues 122 to 126 and histidine 185; that span reads STHVR. Glutamate 225 is a binding site for L-arginine. Arginine 229 provides a ligand contact to ATP. Cysteine 271 is a binding site for L-arginine. ATP-binding positions include 280 to 284 and 309 to 314; these read RASVH and RGTRGE.

It belongs to the ATP:guanido phosphotransferase family.

The enzyme catalyses L-arginine + ATP = N(omega)-phospho-L-arginine + ADP + H(+). In terms of biological role, catalyzes the reversible transfer of high energy ATP gamma-phosphate group to L-arginine. The chain is Arginine kinase from Polybetes pythagoricus (South American huntsman spider).